The following is a 740-amino-acid chain: 1,4-alpha-glucan branching enzyme GlgB (740 aa).

The active-site Nucleophile is the D419. E472 serves as the catalytic Proton donor.

Belongs to the glycosyl hydrolase 13 family. GlgB subfamily. In terms of assembly, monomer.

The enzyme catalyses Transfers a segment of a (1-&gt;4)-alpha-D-glucan chain to a primary hydroxy group in a similar glucan chain.. The protein operates within glycan biosynthesis; glycogen biosynthesis. In terms of biological role, catalyzes the formation of the alpha-1,6-glucosidic linkages in glycogen by scission of a 1,4-alpha-linked oligosaccharide from growing alpha-1,4-glucan chains and the subsequent attachment of the oligosaccharide to the alpha-1,6 position. The polypeptide is 1,4-alpha-glucan branching enzyme GlgB (Paramagnetospirillum magneticum (strain ATCC 700264 / AMB-1) (Magnetospirillum magneticum)).